The chain runs to 552 residues: Dihydroxy-acid dehydratase (552 aa).

Asp-78 lines the Mg(2+) pocket. Cys-119 is a [2Fe-2S] cluster binding site. Mg(2+) is bound by residues Asp-120 and Lys-121. The residue at position 121 (Lys-121) is an N6-carboxylysine. Cys-191 is a binding site for [2Fe-2S] cluster. Glu-442 is a Mg(2+) binding site. The active-site Proton acceptor is Ser-468.

It belongs to the IlvD/Edd family. As to quaternary structure, homodimer. The cofactor is [2Fe-2S] cluster. Requires Mg(2+) as cofactor.

The enzyme catalyses (2R)-2,3-dihydroxy-3-methylbutanoate = 3-methyl-2-oxobutanoate + H2O. It carries out the reaction (2R,3R)-2,3-dihydroxy-3-methylpentanoate = (S)-3-methyl-2-oxopentanoate + H2O. Its pathway is amino-acid biosynthesis; L-isoleucine biosynthesis; L-isoleucine from 2-oxobutanoate: step 3/4. The protein operates within amino-acid biosynthesis; L-valine biosynthesis; L-valine from pyruvate: step 3/4. Its function is as follows. Functions in the biosynthesis of branched-chain amino acids. Catalyzes the dehydration of (2R,3R)-2,3-dihydroxy-3-methylpentanoate (2,3-dihydroxy-3-methylvalerate) into 2-oxo-3-methylpentanoate (2-oxo-3-methylvalerate) and of (2R)-2,3-dihydroxy-3-methylbutanoate (2,3-dihydroxyisovalerate) into 2-oxo-3-methylbutanoate (2-oxoisovalerate), the penultimate precursor to L-isoleucine and L-valine, respectively. This Caldicellulosiruptor saccharolyticus (strain ATCC 43494 / DSM 8903 / Tp8T 6331) protein is Dihydroxy-acid dehydratase.